The chain runs to 92 residues: Small ribosomal subunit protein uS19 (92 aa).

The protein belongs to the universal ribosomal protein uS19 family.

Functionally, protein S19 forms a complex with S13 that binds strongly to the 16S ribosomal RNA. The sequence is that of Small ribosomal subunit protein uS19 from Paracidovorax citrulli (strain AAC00-1) (Acidovorax citrulli).